A 331-amino-acid polypeptide reads, in one-letter code: Biotin synthase (331 aa).

The 230-residue stretch at 40–269 (YRVQLASLLS…HARVRLSAGR (230 aa)) folds into the Radical SAM core domain. Positions 55, 59, and 62 each coordinate [4Fe-4S] cluster. Cysteine 100, cysteine 132, cysteine 192, and arginine 264 together coordinate [2Fe-2S] cluster.

This sequence belongs to the radical SAM superfamily. Biotin synthase family. In terms of assembly, homodimer. It depends on [4Fe-4S] cluster as a cofactor. [2Fe-2S] cluster is required as a cofactor.

The catalysed reaction is (4R,5S)-dethiobiotin + (sulfur carrier)-SH + 2 reduced [2Fe-2S]-[ferredoxin] + 2 S-adenosyl-L-methionine = (sulfur carrier)-H + biotin + 2 5'-deoxyadenosine + 2 L-methionine + 2 oxidized [2Fe-2S]-[ferredoxin]. It participates in cofactor biosynthesis; biotin biosynthesis; biotin from 7,8-diaminononanoate: step 2/2. Its function is as follows. Catalyzes the conversion of dethiobiotin (DTB) to biotin by the insertion of a sulfur atom into dethiobiotin via a radical-based mechanism. The sequence is that of Biotin synthase from Synechococcus sp. (strain CC9605).